Here is a 196-residue protein sequence, read N- to C-terminus: Guanylate kinase (196 aa).

The Guanylate kinase-like domain occupies 8-189 (GKIIIISGPS…AADKLRHILY (182 aa)). 15–22 (GPSGVGKK) lines the ATP pocket.

The protein belongs to the guanylate kinase family.

The protein localises to the cytoplasm. The catalysed reaction is GMP + ATP = GDP + ADP. In terms of biological role, essential for recycling GMP and indirectly, cGMP. The protein is Guanylate kinase of Malacoplasma penetrans (strain HF-2) (Mycoplasma penetrans).